The following is a 401-amino-acid chain: Chalcone synthase 6 (401 aa).

Cys168 is an active-site residue.

Belongs to the thiolase-like superfamily. Chalcone/stilbene synthases family.

It carries out the reaction (E)-4-coumaroyl-CoA + 3 malonyl-CoA + 3 H(+) = 2',4,4',6'-tetrahydroxychalcone + 3 CO2 + 4 CoA. It participates in secondary metabolite biosynthesis; flavonoid biosynthesis. The primary product of this enzyme is 4,2',4',6'-tetrahydroxychalcone (also termed naringenin-chalcone or chalcone) which can under specific conditions spontaneously isomerize into naringenin. The chain is Chalcone synthase 6 (CHS6) from Sorghum bicolor (Sorghum).